Reading from the N-terminus, the 146-residue chain is Anti-sigma F factor (146 aa).

This sequence belongs to the anti-sigma-factor family.

It carries out the reaction L-seryl-[protein] + ATP = O-phospho-L-seryl-[protein] + ADP + H(+). The enzyme catalyses L-threonyl-[protein] + ATP = O-phospho-L-threonyl-[protein] + ADP + H(+). In terms of biological role, binds to sigma F and blocks its ability to form an RNA polymerase holoenzyme (E-sigma F). Phosphorylates SpoIIAA on a serine residue. This phosphorylation may enable SpoIIAA to act as an anti-anti-sigma factor that counteracts SpoIIAB and thus releases sigma F from inhibition. The sequence is that of Anti-sigma F factor from Geobacillus kaustophilus (strain HTA426).